A 582-amino-acid chain; its full sequence is Urocanate reductase (582 aa).

Positions 1-20 (MHYKKSIIGIAVTATAIIAG) are cleaved as a signal peptide. The N-palmitoyl cysteine moiety is linked to residue cysteine 21. A lipid anchor (S-diacylglycerol cysteine) is attached at cysteine 21. The residue at position 93 (threonine 93) is an FMN phosphoryl threonine. Alanine 143, glutamate 162, asparagine 170, serine 171, glycine 175, alanine 176, alanine 285, and aspartate 352 together coordinate FAD. The active-site Proton donor is the arginine 411. Residues histidine 521, glutamate 550, and alanine 565 each contribute to the FAD site.

Belongs to the FAD-dependent oxidoreductase 2 family. FRD/SDH subfamily. FAD is required as a cofactor. Requires FMN as cofactor.

It localises to the cell membrane. The enzyme catalyses dihydrourocanate + A = urocanate + AH2. Functionally, catalyzes the two-electron reduction of urocanate to dihydrourocanate (also named imidazole propionate or deamino-histidine). The physiological electron donor is unknown; it might be the membrane-bound tetraheme cytochrome c (CymA). Enables anaerobic growth with urocanate as a sole terminal electron acceptor, and thus can provide the cells with a niche where no other bacteria can compete and survive. Is unable to reduce cinnamate and other unsaturated organic acids such as acrylic, crotonic, fumaric and orotic acids. Has no fumarate reductase or succinate dehydrogenase activity. This Shewanella oneidensis (strain ATCC 700550 / JCM 31522 / CIP 106686 / LMG 19005 / NCIMB 14063 / MR-1) protein is Urocanate reductase (urdA).